The primary structure comprises 150 residues: Large ribosomal subunit protein bL9 (150 aa).

It belongs to the bacterial ribosomal protein bL9 family.

Functionally, binds to the 23S rRNA. The protein is Large ribosomal subunit protein bL9 of Halorhodospira halophila (strain DSM 244 / SL1) (Ectothiorhodospira halophila (strain DSM 244 / SL1)).